The primary structure comprises 216 residues: Probable nicotinate-nucleotide adenylyltransferase (216 aa).

It belongs to the NadD family.

It catalyses the reaction nicotinate beta-D-ribonucleotide + ATP + H(+) = deamido-NAD(+) + diphosphate. It participates in cofactor biosynthesis; NAD(+) biosynthesis; deamido-NAD(+) from nicotinate D-ribonucleotide: step 1/1. Its function is as follows. Catalyzes the reversible adenylation of nicotinate mononucleotide (NaMN) to nicotinic acid adenine dinucleotide (NaAD). The protein is Probable nicotinate-nucleotide adenylyltransferase of Geotalea daltonii (strain DSM 22248 / JCM 15807 / FRC-32) (Geobacter daltonii).